The primary structure comprises 527 residues: MGKFIKQLSKFGKKVGGALTSNTAKKIYKTIGDTAVRFAESDIGSAAIDGLIQGSVESVLTGESYGETVKRAVLLNVLGAGDEIPDPLSPGEQGIQRKIKELEDEMKGEVVRTKHNEQIIRRFGADLDEVYKFAVSEYKEGVEEKDQFEILKKALTSYGELTKAEFGELKRLEKALQKESSERSKDESMMVKEYRQKIEALKDAIEVESTGIQEEAIQEIAGMSADILESAAEEVPLFGGGVATSIATARAIEGGYKLKKVINALSGIDLSHLRTPKIQPKTLEAILEAPTKEEIKDLSLVEGIQMKLQNLEENRNEVLHIQEEILPKLREAMIEDHKEIGDERDKRILPKTAMRFKVPTTQQPVIQIYSAPWDSDDVFMFHCISHHHLNESSFLGFDLELEYVHYEDLTRHWHALGAAQEVTGRSLKEAYSEFFQLAAQIDGAGAIHQKRLIRSKSYHPIYLGAMHYDIAYRELKNNALKIVNDSEVQKHLLRGPKHFQRRAILSALKDGVKLLGGVDLAEFMRYA.

Positions 1 to 42 (MGKFIKQLSKFGKKVGGALTSNTAKKIYKTIGDTAVRFAESD) are involved in membrane permeabilization.

Belongs to the orbivirus VP5 family.

It is found in the virion. Its function is as follows. VP5 protein is one of the two proteins (with VP2) which constitute the virus particle outer capsid. Acts as a membrane permeabilization protein that mediates release of viral particles from endosomal compartments into the cytoplasm. Permeabilization activity is probably negatively regulated by VP2 and is triggered by endosomal degradation of VP2 and exposure to low pH. This is Outer capsid protein VP5 (Segment-6) from Antilocapra americana (Pronghorn).